Reading from the N-terminus, the 185-residue chain is Lysozyme g (185 aa).

Residue E73 is part of the active site.

Belongs to the glycosyl hydrolase 23 family.

The catalysed reaction is Hydrolysis of (1-&gt;4)-beta-linkages between N-acetylmuramic acid and N-acetyl-D-glucosamine residues in a peptidoglycan and between N-acetyl-D-glucosamine residues in chitodextrins.. In Cyprinus carpio (Common carp), this protein is Lysozyme g.